The following is a 224-amino-acid chain: Elongation factor 1-beta (224 aa).

The protein belongs to the EF-1-beta/EF-1-delta family. In terms of assembly, EF-1 is composed of 4 subunits: alpha, beta (1B-alpha=beta'), delta (1B-beta), and gamma (1B-gamma).

In terms of biological role, EF-1-beta and EF-1-beta' stimulate the exchange of GDP bound to EF-1-alpha to GTP. The protein is Elongation factor 1-beta of Oryza sativa subsp. japonica (Rice).